A 165-amino-acid polypeptide reads, in one-letter code: Biosynthetic peptidoglycan transglycosylase (165 aa).

The protein belongs to the glycosyltransferase 51 family.

Its subcellular location is the cell inner membrane. The enzyme catalyses [GlcNAc-(1-&gt;4)-Mur2Ac(oyl-L-Ala-gamma-D-Glu-L-Lys-D-Ala-D-Ala)](n)-di-trans,octa-cis-undecaprenyl diphosphate + beta-D-GlcNAc-(1-&gt;4)-Mur2Ac(oyl-L-Ala-gamma-D-Glu-L-Lys-D-Ala-D-Ala)-di-trans,octa-cis-undecaprenyl diphosphate = [GlcNAc-(1-&gt;4)-Mur2Ac(oyl-L-Ala-gamma-D-Glu-L-Lys-D-Ala-D-Ala)](n+1)-di-trans,octa-cis-undecaprenyl diphosphate + di-trans,octa-cis-undecaprenyl diphosphate + H(+). The protein operates within cell wall biogenesis; peptidoglycan biosynthesis. In terms of biological role, peptidoglycan polymerase that catalyzes glycan chain elongation from lipid-linked precursors. In Neisseria meningitidis, this protein is Biosynthetic peptidoglycan transglycosylase.